The sequence spans 384 residues: Signal peptide peptidase-like 3 (384 aa).

The Lumenal portion of the chain corresponds to 1–8 (MAEQTYSW). Residues 9–29 (AYSLVDSSQVSTFLISILLIV) form a helical membrane-spanning segment. Residues 30 to 73 (YGSFRSLNMDFENQDKEKDSNSSSGSFNGNSTNNSIQTIDSTQA) are Cytoplasmic-facing. A helical transmembrane segment spans residues 74-94 (LFLPIGASVSLLVMFFFFDSV). A topological domain (lumenal) is located at residue Q95. A helical membrane pass occupies residues 96 to 116 (VVFTICTAVLATIAFAFLLLP). At 117–138 (MCQYLTRPCSPQNKISFGCCGR) the chain is on the cytoplasmic side. Residues 139–159 (FTAAELLSFSLSVMLVLIWVL) form a helical membrane-spanning segment. Topologically, residues 160–164 (TGHWL) are lumenal. Residues 165 to 185 (LMDALAMGLCVAMIAFVRLPS) form a helical membrane-spanning segment. Over 186 to 190 (LKVSC) the chain is Cytoplasmic. A helical transmembrane segment spans residues 191–211 (LLLSGLLIYDVFWVFFSAYIF). Residue D200 is part of the active site. Residues 212–262 (NSNVMVKVATQPADNPLDVLSRKLHLGPNVGRDVPRLSLPGKLVFPSSTGS) are Lumenal-facing. The helical transmembrane segment at 263–283 (HFSMLGIGDIVMPGLLLCFVL) threads the bilayer. D271 is a catalytic residue. At 284–311 (RYDNYKKQASGDSCGAPGPANISGRMQK) the chain is on the cytoplasmic side. A helical membrane pass occupies residues 312-332 (VSYFHCTLIGYFVGLLTATVA). The Lumenal segment spans residues 333–339 (SRIHRAA). Residues 340–360 (QPALLYLVPFTLLPLLTMAYL) traverse the membrane as a helical segment. Residues 341–343 (PAL) carry the PAL motif. Over 361-384 (KGDLRRMWSEPFHSKSSSSRFLEV) the chain is Cytoplasmic.

The protein belongs to the peptidase A22B family. As to quaternary structure, monomer. Homodimer. Interacts with STIM1 (via transmembrane region and SOAR/CAD domain); the interaction promotes the binding of STIM1 to ORAI1. In terms of processing, not glycosylated.

The protein localises to the endoplasmic reticulum membrane. It is found in the golgi apparatus. Its subcellular location is the membrane. With respect to regulation, its proteolytic activity is blocked by a signal peptide peptidase (SPP) inhibitor, (ZLL)2-ketone (ZLL) or a gamma-secretase inhibitor, LY411,575. Its function is as follows. Intramembrane-cleaving aspartic protease (I-CLiP) that cleaves type II membrane protein substrates in or close to their luminal transmembrane domain boundaries. Acts like a sheddase by mediating the proteolytic release and secretion of active site-containing ectodomains of glycan-modifiying glycosidase and glycosyltransferase enzymes such as MGAT5, B4GAT1 and B4GALT1. Plays a role in the regulation of cellular glycosylation processes. Required to link T-cell antigen receptor (TCR) and calcineurin-NFAT signaling cascades in lymphocytes by promoting the association of STIM1 and ORAI1 during store-operated calcium entry (SOCE) in a protease-independent manner. The sequence is that of Signal peptide peptidase-like 3 from Mus musculus (Mouse).